Reading from the N-terminus, the 2009-residue chain is Sodium channel protein type 1 subunit alpha (2009 aa).

The Cytoplasmic segment spans residues 1-128; it reads MEQTVLVPPG…KIAIKILVHS (128 aa). Over residues 28 to 48 the composition is skewed to basic and acidic residues; that stretch reads RIAEEKAKNPKPDKKDDDENG. Residues 28–60 are disordered; the sequence is RIAEEKAKNPKPDKKDDDENGPKPNSDLEAGKN. An I repeat occupies 110–454; that stretch reads ILTPFNPLRK…QQMLEQLKKQ (345 aa). Residues 129–146 form a helical membrane-spanning segment; it reads LFSMLIMCTILTNCVFMT. The Extracellular segment spans residues 147–152; sequence MSNPPD. The chain crosses the membrane as a helical span at residues 153 to 177; sequence WTKNVEYTFTGIYTFESLIKIIARG. Over 178–188 the chain is Cytoplasmic; it reads FCLEDFTFLRD. A helical transmembrane segment spans residues 189-205; that stretch reads PWNWLDFTVITFAYVTE. Residues 206-213 are Extracellular-facing; it reads FVDLGNVS. An N-linked (GlcNAc...) asparagine glycan is attached at Asn211. A helical membrane pass occupies residues 214 to 235; the sequence is ALRTFRVLRALKTISVIPGLKT. The Cytoplasmic segment spans residues 236–245; sequence IVGALIQSVK. Residues 246-269 traverse the membrane as a helical segment; that stretch reads KLSDVMILTVFCLSVFALIGLQLF. The Extracellular portion of the chain corresponds to 270–369; sequence MGNLRNKCVQ…YGYTSFDTFS (100 aa). Cystine bridges form between Cys277/Cys345 and Cys336/Cys351. N-linked (GlcNAc...) asparagine glycans are attached at residues Asn284, Asn295, Asn301, Asn306, and Asn338. An intramembrane region (pore-forming) is located at residues 370-384; that stretch reads WAFLSLFRLMTQDFW. Residues 385–397 are Extracellular-facing; sequence ENLYQLTLRAAGK. Residues 398–423 form a helical membrane-spanning segment; the sequence is TYMIFFVLVIFLGSFYLINLILAVVA. Residues 424–768 lie on the Cytoplasmic side of the membrane; sequence MAYEEQNQAT…HIVNLVVMDP (345 aa). Positions 458–528 are disordered; it reads AQQAAAATAS…EFHKSESEDS (71 aa). A Phosphoserine modification is found at Ser470. Over residues 479–492 the composition is skewed to low complexity; it reads LSDSSSEASKLSSK. Basic residues predominate over residues 495-506; that stretch reads KERRNRRKKRKQ. Positions 507-528 are enriched in basic and acidic residues; that stretch reads KEQSGGEEKDDDEFHKSESEDS. A phosphoserine mark is found at Ser523, Ser525, Ser550, Ser551, Ser607, and Ser730. Positions 584 to 628 are disordered; it reads VGSENDFADDEHSTFEDNESRRDSLFVPRRHGERRNSNLSQTSRS. Residues 593-607 are compositionally biased toward basic and acidic residues; sequence DEHSTFEDNESRRDS. An II repeat occupies 750 to 1022; it reads CSPYWLKVKH…QIAVDRMHKG (273 aa). The helical transmembrane segment at 769–787 threads the bilayer; the sequence is FVDLAITICIVLNTLFMAM. Topologically, residues 788–797 are extracellular; sequence EHYPMTEHFN. A helical transmembrane segment spans residues 798–820; it reads HVLTVGNLVFTGIFTAEMFLKII. Topologically, residues 821-830 are cytoplasmic; sequence AMDPYYYFQE. A helical membrane pass occupies residues 831 to 849; the sequence is GWNIFDGFIVTLSLVELGL. The Extracellular portion of the chain corresponds to 850-854; the sequence is ANVEG. A helical membrane pass occupies residues 855-874; that stretch reads LSVLRSFRLLRVFKLAKSWP. Residues 875 to 891 are Cytoplasmic-facing; it reads TLNMLIKIIGNSVGALG. A helical membrane pass occupies residues 892–912; that stretch reads NLTLVLAIIVFIFAVVGMQLF. The Extracellular segment spans residues 913–938; that stretch reads GKSYKDCVCKIATDCKLPRWHMNDFF. A disulfide bridge links Cys921 with Cys927. The pore-forming intramembrane region spans 939 to 952; the sequence is HSFLIVFRVLCGEW. Residues 953-965 lie on the Extracellular side of the membrane; the sequence is IETMWDCMEVAGQ. Cysteines 959 and 968 form a disulfide. A helical membrane pass occupies residues 966-992; that stretch reads AMCLTVFMMVMVIRNLVVLNLFLALLL. Residues 993–1218 are Cytoplasmic-facing; that stretch reads SSFSADNLAA…RTCFRIVEHN (226 aa). Residues 1129-1163 form a disordered region; it reads TEDFSSESDLEESKEKLNESSSSSEGSTVDIGAPA. Residues 1200–1514 form an III repeat; it reads RGKQWWNLRR…KKYYNAMKKL (315 aa). A helical transmembrane segment spans residues 1219–1237; that stretch reads WFETFIVFMILLSSGALAF. The Extracellular segment spans residues 1238-1250; the sequence is EDIYIDQRKTIKT. A helical transmembrane segment spans residues 1251-1276; it reads MLEYADKVFTYIFILEMLLKWVAYGY. Residues 1277 to 1278 are Cytoplasmic-facing; that stretch reads QT. Residues 1279-1304 traverse the membrane as a helical segment; the sequence is YFTNAWCWLDFLIVDVSLVSLTANAL. Residues 1305–1313 are Extracellular-facing; sequence GYSELGAIK. The chain crosses the membrane as a helical span at residues 1314–1332; that stretch reads SLRTLRALRPLRALSRFEG. The Cytoplasmic portion of the chain corresponds to 1333–1345; the sequence is MRVVVNALLGAIP. Residues 1346–1369 form a helical membrane-spanning segment; the sequence is SIMNVLLVCLIFWLIFSIMGVNLF. Topologically, residues 1370–1415 are extracellular; it reads AGKFYHCVNTTTGDTFEITEVNNHSDCLKLIERNETARWKNVKVNF. Cys1376 and Cys1396 are oxidised to a cystine. N-linked (GlcNAc...) asparagine glycosylation is found at Asn1378, Asn1392, and Asn1403. The pore-forming intramembrane region spans 1416-1433; it reads DNVGFGYLSLLQVATFKG. Residues 1434 to 1457 are Extracellular-facing; it reads WMDIMYAAVDSRNVELQPKYEESL. Residues 1458–1483 form a helical membrane-spanning segment; it reads YMYLYFVIFIIFGSFFTLNLFIGVII. Over 1484-1541 the chain is Cytoplasmic; the sequence is DNFNQQKKKFGGQDIFMTEEQKKYYNAMKKLGSKKPQKPIPRPGNKFQGMVFDFVTRQ. A Phosphoserine; by PKC modification is found at Ser1516. The IV repeat unit spans residues 1523–1821; sequence IPRPGNKFQG…WEKFDPDATQ (299 aa). The helical transmembrane segment at 1542–1560 threads the bilayer; that stretch reads VFDISIMILICLNMVTMMV. The Extracellular portion of the chain corresponds to 1561 to 1571; the sequence is ETDDQSDYVTS. Positions 1561–1571 are S1-S2 loop of repeat IV; the sequence is ETDDQSDYVTS. The chain crosses the membrane as a helical span at residues 1572–1593; the sequence is ILSRINLVFIVLFTGECVLKLI. The Cytoplasmic segment spans residues 1594-1601; sequence SLRHYYFT. The helical transmembrane segment at 1602–1623 threads the bilayer; it reads IGWNIFDFVVVILSIVGMFLAE. Residues 1619 to 1636 are S3b-S4 loop of repeat IV; it reads MFLAELIEKYFVSPTLFR. Over 1624–1636 the chain is Extracellular; the sequence is LIEKYFVSPTLFR. The chain crosses the membrane as a helical span at residues 1637–1655; the sequence is VIRLARIGRILRLIKGAKG. Residues 1656 to 1665 lie on the Cytoplasmic side of the membrane; it reads IRTLLFALMM. Residues 1666 to 1688 form a helical membrane-spanning segment; sequence SLPALFNIGLLLFLVMFIYAIFG. Residues 1689–1711 are Extracellular-facing; the sequence is MSNFAYVKREVGIDDMFNFETFG. The segment at residues 1712-1726 is an intramembrane region (pore-forming); the sequence is NSMICLFQITTSAGW. Topologically, residues 1727–1759 are extracellular; that stretch reads DGLLAPILNSKPPDCDPNKVNPGSSVKGDCGNP. An intrachain disulfide couples Cys1741 to Cys1756. A helical transmembrane segment spans residues 1760 to 1788; sequence SVGIFFFVSYIIISFLVVVNMYIAVILEN. The Cytoplasmic portion of the chain corresponds to 1789 to 2009; sequence FSVATEESAE…EGKDEKAKGK (221 aa). One can recognise an IQ domain in the interval 1915–1944; the sequence is EEVSAVIIQRAYRRHLLKRTVKQASFTYNK. Residues 1986–2009 form a disordered region; the sequence is YDRVTKPIVEKHEQEGKDEKAKGK. Positions 1988–2009 are enriched in basic and acidic residues; that stretch reads RVTKPIVEKHEQEGKDEKAKGK.

It belongs to the sodium channel (TC 1.A.1.10) family. Nav1.1/SCN1A subfamily. As to quaternary structure, the Nav1.1 voltage-gated sodium channel consists of an ion-conducting alpha subunit SCN1A which is functional on its own regulated by one or more beta-1 (SCN1B), beta-2 (SCN2B), beta-3 (SCN3B) and beta-4 (SCN4B) subunits. SCN1B and SCN3B are non-covalently associated with SCN1A. SCN2B and SCN4B are disulfide-linked to SCN1A. SCN1B regulates both the expression at the plasma membrane and the voltage dependence of Nav1.1 inactivation. SCN3B and SCN4B reduce Nav1.1 conductance. Probably interacts with TMEM233; modulates the gating properties of NaV1.1. Interacts with FGF13; regulates the steady-state inactivation of Nav.1.1. Phosphorylation at Ser-1516 by PKC in a highly conserved cytoplasmic loop slows inactivation of the sodium channel and reduces peak sodium currents.

It localises to the cell membrane. It catalyses the reaction Na(+)(in) = Na(+)(out). Activated by the spider toxins Hm1a and Hm1b (H.maculata, AC P60992 and AC P0DOC5) eliciting acute pain and mechanical allodynia. Inhibited by the conotoxin GVIIJ. Pore-forming subunit of Nav1.1, a voltage-gated sodium (Nav) channel that directly mediates the depolarizing phase of action potentials in excitable membranes. Navs, also called VGSCs (voltage-gated sodium channels) or VDSCs (voltage-dependent sodium channels), operate by switching between closed and open conformations depending on the voltage difference across the membrane. In the open conformation they allow Na(+) ions to selectively pass through the pore, along their electrochemical gradient. The influx of Na(+) ions provokes membrane depolarization, initiating the propagation of electrical signals throughout cells and tissues. By regulating the excitability of neurons, ensures that they respond appropriately to synaptic inputs, maintaining the balance between excitation and inhibition in brain neural circuits. Nav1.1 plays a role in controlling the excitability and action potential propagation from somatosensory neurons, thereby contributing to the sensory perception of mechanically-induced pain. In Rattus norvegicus (Rat), this protein is Sodium channel protein type 1 subunit alpha.